Here is a 370-residue protein sequence, read N- to C-terminus: Queuine tRNA-ribosyltransferase (370 aa).

D93 functions as the Proton acceptor in the catalytic mechanism. Residues 93–97 (DSGGF), D147, Q190, and G217 each bind substrate. Residues 248–254 (GVGTPDY) form an RNA binding region. The active-site Nucleophile is D267. The tract at residues 272-276 (TRVAR) is RNA binding; important for wobble base 34 recognition. The Zn(2+) site is built by C305, C307, C310, and H336.

The protein belongs to the queuine tRNA-ribosyltransferase family. As to quaternary structure, homodimer. Within each dimer, one monomer is responsible for RNA recognition and catalysis, while the other monomer binds to the replacement base PreQ1. It depends on Zn(2+) as a cofactor.

The enzyme catalyses 7-aminomethyl-7-carbaguanine + guanosine(34) in tRNA = 7-aminomethyl-7-carbaguanosine(34) in tRNA + guanine. It functions in the pathway tRNA modification; tRNA-queuosine biosynthesis. Functionally, catalyzes the base-exchange of a guanine (G) residue with the queuine precursor 7-aminomethyl-7-deazaguanine (PreQ1) at position 34 (anticodon wobble position) in tRNAs with GU(N) anticodons (tRNA-Asp, -Asn, -His and -Tyr). Catalysis occurs through a double-displacement mechanism. The nucleophile active site attacks the C1' of nucleotide 34 to detach the guanine base from the RNA, forming a covalent enzyme-RNA intermediate. The proton acceptor active site deprotonates the incoming PreQ1, allowing a nucleophilic attack on the C1' of the ribose to form the product. After dissociation, two additional enzymatic reactions on the tRNA convert PreQ1 to queuine (Q), resulting in the hypermodified nucleoside queuosine (7-(((4,5-cis-dihydroxy-2-cyclopenten-1-yl)amino)methyl)-7-deazaguanosine). The protein is Queuine tRNA-ribosyltransferase of Natranaerobius thermophilus (strain ATCC BAA-1301 / DSM 18059 / JW/NM-WN-LF).